Reading from the N-terminus, the 258-residue chain is Tryptophan synthase alpha chain (258 aa).

Residues glutamate 47 and aspartate 58 each act as proton acceptor in the active site.

This sequence belongs to the TrpA family. As to quaternary structure, tetramer of two alpha and two beta chains.

It carries out the reaction (1S,2R)-1-C-(indol-3-yl)glycerol 3-phosphate + L-serine = D-glyceraldehyde 3-phosphate + L-tryptophan + H2O. It participates in amino-acid biosynthesis; L-tryptophan biosynthesis; L-tryptophan from chorismate: step 5/5. Its function is as follows. The alpha subunit is responsible for the aldol cleavage of indoleglycerol phosphate to indole and glyceraldehyde 3-phosphate. The sequence is that of Tryptophan synthase alpha chain from Bacillus cereus (strain B4264).